The chain runs to 2183 residues: Genome polyprotein (2183 aa).

Gly2 is lipidated: N-myristoyl glycine; by host. Over 2–1493 (GAQVSTQKTG…HVSRAFICLQ (1492 aa)) the chain is Cytoplasmic. Positions 566 to 582 (FYQGPTEESVERAMGRV) are amphipathic alpha-helix. Catalysis depends on for protease 2A activity residues His870 and Asp888. Cys905 and Cys907 together coordinate Zn(2+). Catalysis depends on Cys959, which acts as the For protease 2A activity. Zn(2+)-binding residues include Cys965 and His967. The membrane-binding stretch occupies residues 1099 to 1171 (NNGWLKKFTE…EQSAPSQSDQ (73 aa)). The tract at residues 1099-1237 (NNGWLKKFTE…SPGAGKSVAT (139 aa)) is oligomerization. The segment at 1120-1124 (AVKIQ) is RNA-binding. Residues 1203–1359 (EKKMSNYIQF…SMYSQNGKIN (157 aa)) enclose the SF3 helicase domain. Zn(2+) contacts are provided by Cys1367, Cys1379, and Cys1384. The C4-type; degenerate zinc finger occupies 1367–1384 (CDEECCPVNFKRCCPLVC). The RNA-binding stretch occupies residues 1411–1418 (EYNHRHSV). The interval 1422–1427 (LEALFQ) is oligomerization. Residues 1494–1509 (ALTTFVSVAGIIYIIY) lie within the membrane without spanning it. The Cytoplasmic segment spans residues 1510-2183 (KLFAGFQGAY…TLRRKWLDSF (674 aa)). An O-(5'-phospho-RNA)-tyrosine modification is found at Tyr1519. Positions 1539–1717 (GPAFEFAVAM…FSAGLLKHYF (179 aa)) constitute a Peptidase C3 domain. Active-site for protease 3C activity residues include His1578, Glu1609, and Cys1685. A RdRp catalytic domain is found at 1948–2064 (GHLIAFDYSG…SYPWPIDASL (117 aa)). The Mg(2+) site is built by Asp1954 and Asp2050.

The protein belongs to the picornaviruses polyprotein family. In terms of assembly, interacts with capsid protein VP1 and capsid protein VP3 to form heterotrimeric protomers. As to quaternary structure, interacts with capsid protein VP0, and capsid protein VP3 to form heterotrimeric protomers. Five protomers subsequently associate to form pentamers which serve as building blocks for the capsid. Interacts with capsid protein VP2, capsid protein VP3 and capsid protein VP4 following cleavage of capsid protein VP0. Interacts with host CXADR. Interacts with capsid protein VP1 and capsid protein VP3 in the mature capsid. In terms of assembly, interacts with capsid protein VP0 and capsid protein VP1 to form heterotrimeric protomers. Five protomers subsequently associate to form pentamers which serve as building blocks for the capsid. Interacts with capsid protein VP4 in the mature capsid. Interacts with protein 2C; this interaction may be important for virion morphogenesis. As to quaternary structure, interacts with capsid protein VP1 and capsid protein VP3. Homodimer. In terms of assembly, homohexamer; forms a hexameric ring structure with 6-fold symmetry characteristic of AAA+ ATPases. Interacts (via N-terminus) with host RTN3 (via reticulon domain); this interaction is important for viral replication. Interacts with capsid protein VP3; this interaction may be important for virion morphogenesis. As to quaternary structure, interacts with protein 3CD. Homodimer. Interacts with host GBF1. Interacts (via GOLD domain) with host ACBD3 (via GOLD domain); this interaction allows the formation of a viral protein 3A/ACBD3 heterotetramer with a 2:2 stoichiometry, which will stimulate the recruitment of host PI4KB in order to synthesize PI4P at the viral RNA replication sites. In terms of assembly, interacts with RNA-directed RNA polymerase. As to quaternary structure, interacts with protein 3AB and with RNA-directed RNA polymerase. Interacts with Viral protein genome-linked and with protein 3CD. The cofactor is Mg(2+). In terms of processing, specific enzymatic cleavages in vivo by the viral proteases yield processing intermediates and the mature proteins. Post-translationally, myristoylation is required for the formation of pentamers during virus assembly. Further assembly of 12 pentamers and a molecule of genomic RNA generates the provirion. During virion maturation, immature virions are rendered infectious following cleavage of VP0 into VP4 and VP2. This maturation seems to be an autocatalytic event triggered by the presence of RNA in the capsid and it is followed by a conformational change infectious virion. In terms of processing, myristoylation is required during RNA encapsidation and formation of the mature virus particle. Post-translationally, VPg is uridylylated by the polymerase into VPg-pUpU. This acts as a nucleotide-peptide primer for the genomic RNA replication.

It localises to the virion. Its subcellular location is the host cytoplasm. It is found in the host cytoplasmic vesicle membrane. The protein localises to the host nucleus. The enzyme catalyses a ribonucleoside 5'-triphosphate + H2O = a ribonucleoside 5'-diphosphate + phosphate + H(+). It catalyses the reaction Selective cleavage of Tyr-|-Gly bond in the picornavirus polyprotein.. The catalysed reaction is RNA(n) + a ribonucleoside 5'-triphosphate = RNA(n+1) + diphosphate. It carries out the reaction Selective cleavage of Gln-|-Gly bond in the poliovirus polyprotein. In other picornavirus reactions Glu may be substituted for Gln, and Ser or Thr for Gly.. Replication or transcription is subject to high level of random mutations by the nucleotide analog ribavirin. Functionally, forms an icosahedral capsid of pseudo T=3 symmetry with capsid proteins VP2 and VP3. The capsid is 300 Angstroms in diameter, composed of 60 copies of each capsid protein and enclosing the viral positive strand RNA genome. Capsid protein VP1 mainly forms the vertices of the capsid. Capsid protein VP1 interacts with host CXADR to provide virion attachment to target host cells. This attachment induces virion internalization. Tyrosine kinases are probably involved in the entry process. After binding to its receptor, the capsid undergoes conformational changes. Capsid protein VP1 N-terminus (that contains an amphipathic alpha-helix) and capsid protein VP4 are externalized. Together, they shape a pore in the host membrane through which viral genome is translocated to host cell cytoplasm. Its function is as follows. Forms an icosahedral capsid of pseudo T=3 symmetry with capsid proteins VP2 and VP3. The capsid is 300 Angstroms in diameter, composed of 60 copies of each capsid protein and enclosing the viral positive strand RNA genome. Lies on the inner surface of the capsid shell. After binding to the host receptor, the capsid undergoes conformational changes. Capsid protein VP4 is released, Capsid protein VP1 N-terminus is externalized, and together, they shape a pore in the host membrane through which the viral genome is translocated into the host cell cytoplasm. In terms of biological role, component of immature procapsids, which is cleaved into capsid proteins VP4 and VP2 after maturation. Allows the capsid to remain inactive before the maturation step. Functionally, cysteine protease that cleaves viral polyprotein and specific host proteins. It is responsible for the autocatalytic cleavage between the P1 and P2 regions, which is the first cleavage occurring in the polyprotein. Also cleaves the host translation initiation factor EIF4G1, in order to shut down the capped cellular mRNA translation. Inhibits the host nucleus-cytoplasm protein and RNA trafficking by cleaving host members of the nuclear pores. Counteracts stress granule formation probably by antagonizing its assembly or promoting its dissassembly. Cleaves and inhibits host IFIH1/MDA5, thereby inhibiting the type-I IFN production and the establishment of the antiviral state. Cleaves and inhibits host MAVS, thereby inhibiting the type-I IFN production and the establishment of the antiviral state. Its function is as follows. Plays an essential role in the virus replication cycle by acting as a viroporin. Creates a pore in the host endoplasmic reticulum and as a consequence releases Ca2+ in the cytoplasm of infected cell. In turn, high levels of cytoplasmic calcium may trigger membrane trafficking and transport of viral ER-associated proteins to viroplasms, sites of viral genome replication. Induces and associates with structural rearrangements of intracellular membranes. Displays RNA-binding, nucleotide binding and NTPase activities. May play a role in virion morphogenesis and viral RNA encapsidation by interacting with the capsid protein VP3. In terms of biological role, localizes the viral replication complex to the surface of membranous vesicles. Together with protein 3CD binds the Cis-Active RNA Element (CRE) which is involved in RNA synthesis initiation. Acts as a cofactor to stimulate the activity of 3D polymerase, maybe through a nucleid acid chaperone activity. Functionally, localizes the viral replication complex to the surface of membranous vesicles. It inhibits host cell endoplasmic reticulum-to-Golgi apparatus transport and causes the disassembly of the Golgi complex, possibly through GBF1 interaction. This would result in depletion of MHC, trail receptors and IFN receptors at the host cell surface. Plays an essential role in viral RNA replication by recruiting ACBD3 and PI4KB at the viral replication sites, thereby allowing the formation of the rearranged membranous structures where viral replication takes place. Its function is as follows. Acts as a primer for viral RNA replication and remains covalently bound to viral genomic RNA. VPg is uridylylated prior to priming replication into VPg-pUpU. The oriI viral genomic sequence may act as a template for this. The VPg-pUpU is then used as primer on the genomic RNA poly(A) by the RNA-dependent RNA polymerase to replicate the viral genome. During genome replication, the VPg-RNA linkage is removed by the host TDP2, thereby accelerating replication. During the late stage of the replication cycle, host TDP2 is excluded from sites of viral RNA synthesis and encapsidation, allowing for the generation of progeny virions. Involved in the viral replication complex and viral polypeptide maturation. It exhibits protease activity with a specificity and catalytic efficiency that is different from protease 3C. Protein 3CD lacks polymerase activity. Protein 3CD binds to the 5'UTR of the viral genome. In terms of biological role, replicates the viral genomic RNA on the surface of intracellular membranes. May form linear arrays of subunits that propagate along a strong head-to-tail interaction called interface-I. Covalently attaches UMP to a tyrosine of VPg, which is used to prime RNA synthesis. The positive stranded RNA genome is first replicated at virus induced membranous vesicles, creating a dsRNA genomic replication form. This dsRNA is then used as template to synthesize positive stranded RNA genomes. ss(+)RNA genomes are either translated, replicated or encapsidated. Functionally, major viral protease that mediates proteolytic processing of the polyprotein. Cleaves host EIF5B, contributing to host translation shutoff. Also cleaves host PABPC1, contributing to host translation shutoff. Cleaves host NLRP1, triggers host N-glycine-mediated degradation of the autoinhibitory NLRP1 N-terminal fragment. This Coxsackievirus B4 (strain JVB / Benschoten / New York/51) protein is Genome polyprotein.